Here is a 208-residue protein sequence, read N- to C-terminus: Large ribosomal subunit protein uL3 (208 aa).

A disordered region spans residues 124–146; the sequence is HGQSRGPMAHGSRYHRRPGSMGP.

This sequence belongs to the universal ribosomal protein uL3 family. In terms of assembly, part of the 50S ribosomal subunit. Forms a cluster with proteins L14 and L19.

In terms of biological role, one of the primary rRNA binding proteins, it binds directly near the 3'-end of the 23S rRNA, where it nucleates assembly of the 50S subunit. The polypeptide is Large ribosomal subunit protein uL3 (Streptococcus thermophilus (strain ATCC BAA-491 / LMD-9)).